The sequence spans 119 residues: Beta-2-microglobulin (119 aa).

The N-terminal stretch at 1–20 is a signal peptide; sequence MARSVVVALLVLLSLSGLEA. The Ig-like C1-type domain occupies 25-114; that stretch reads PKIQVYSRHP…VTFPTPKTVK (90 aa). A disulfide bridge connects residues Cys45 and Cys100.

It belongs to the beta-2-microglobulin family. In terms of assembly, heterodimer of an alpha chain and a beta chain. Beta-2-microglobulin is the beta-chain of major histocompatibility complex class I molecules.

The protein resides in the secreted. In terms of biological role, component of the class I major histocompatibility complex (MHC). Involved in the presentation of peptide antigens to the immune system. The sequence is that of Beta-2-microglobulin (B2M) from Lagothrix lagotricha (Brown woolly monkey).